The chain runs to 578 residues: MKYVVVSGGVISGIGKGVLASSTGMLLKTLGLKVTSIKIDPYMNIDAGTMSPLEHGECFVLDDGGETDLDLGNYERYLGITLSRDHNITTGKIYSHVISRERRGDYLGKTVQIVPHLTNAIQDWIQRVSKIPVDDTGLEPDVCIIELGGTVGDIESAPFVEALRQFQFEVGRENFALIHVSLVPVIHGEQKTKPTQAAIKDLRSLGLIPDMIACRCSEELNRSTIDKIAMFCHVGPEQVVNVHDVNSTYHVPLLLLKQHMIDYLHSRLKLGEVPLTLEDKERGSQLLTNWENMTKNLDDSDDVVKIALVGKYTNLKDSYLSVTKSLEHASMKCRRQLEILWVEASNLEPETQEVDKNKFHDSWNKLSSADGILVPGGFGTRGIEGMILAAKWARESGVPFLGVCLGLQVAAIEFARNVIGRPNSSSTEFLDETLLAPEDQVVIYMPEIDKEHMGGTMRLGLRPTIFQPNSEWSNIRKLYGEVNEVHERHRHRYEINPKIVNDMESRGFIFVGKDETGQRCEIFELKGHPYYVGTQYHPEYTSKVLEPSRPFWGLVAAASGTLGDVIKDINLSEGNENE.

Residues 305 to 564 enclose the Glutamine amidotransferase type-1 domain; sequence KIALVGKYTN…VAAASGTLGD (260 aa). Active-site for GATase activity residues include Cys404, His537, and Glu539.

It belongs to the CTP synthase family. Homodimer. Oligomerizes to a tetramer in the presence of its substrates UTP and ATP. Mg(2+) serves as cofactor.

It is found in the cytoplasm. It carries out the reaction UTP + L-glutamine + ATP + H2O = CTP + L-glutamate + ADP + phosphate + 2 H(+). Its pathway is pyrimidine metabolism; CTP biosynthesis via de novo pathway; CTP from UDP: step 2/2. Activated by GTP. Subject to allosteric product inhibition by CTP. Inhibited by p-chloromercuriphenylsulfonic acid, N-ethylmaleimide and cyclopentenylcytosine (CPEC). Its function is as follows. Catalyzes the ATP-dependent amination of UTP to CTP with either L-glutamine or ammonia as the source of nitrogen. Plays an important role in the regulation of phospholipid synthesis. This Saccharomyces cerevisiae (strain YJM789) (Baker's yeast) protein is CTP synthase 2 (URA8).